We begin with the raw amino-acid sequence, 338 residues long: Tryptophan--tRNA ligase (338 aa).

ATP-binding positions include 11 to 13 (QPS) and 19 to 20 (GN). The short motif at 12 to 20 (PSGELSIGN) is the 'HIGH' region element. D135 contributes to the L-tryptophan binding site. Residues 147–149 (GSD), V189, and 198–202 (KMSKS) contribute to the ATP site. The 'KMSKS' region motif lies at 198-202 (KMSKS).

The protein belongs to the class-I aminoacyl-tRNA synthetase family. In terms of assembly, homodimer.

The protein localises to the cytoplasm. The enzyme catalyses tRNA(Trp) + L-tryptophan + ATP = L-tryptophyl-tRNA(Trp) + AMP + diphosphate + H(+). Its function is as follows. Catalyzes the attachment of tryptophan to tRNA(Trp). The sequence is that of Tryptophan--tRNA ligase from Vibrio cholerae serotype O1 (strain ATCC 39315 / El Tor Inaba N16961).